Here is a 660-residue protein sequence, read N- to C-terminus: DNA ligase (660 aa).

NAD(+) is bound by residues 32–36 (DEVYD), 81–82 (SM), and glutamate 112. Lysine 114 acts as the N6-AMP-lysine intermediate in catalysis. NAD(+) contacts are provided by arginine 135, glutamate 169, lysine 284, and lysine 308. Residues cysteine 402, cysteine 405, cysteine 418, and cysteine 423 each contribute to the Zn(2+) site. The 83-residue stretch at 578 to 660 (VENSPLAHKT…ELLKEAGIEA (83 aa)) folds into the BRCT domain.

This sequence belongs to the NAD-dependent DNA ligase family. LigA subfamily. Requires Mg(2+) as cofactor. The cofactor is Mn(2+).

It carries out the reaction NAD(+) + (deoxyribonucleotide)n-3'-hydroxyl + 5'-phospho-(deoxyribonucleotide)m = (deoxyribonucleotide)n+m + AMP + beta-nicotinamide D-nucleotide.. Its function is as follows. DNA ligase that catalyzes the formation of phosphodiester linkages between 5'-phosphoryl and 3'-hydroxyl groups in double-stranded DNA using NAD as a coenzyme and as the energy source for the reaction. It is essential for DNA replication and repair of damaged DNA. The chain is DNA ligase from Nitratiruptor sp. (strain SB155-2).